Reading from the N-terminus, the 326-residue chain is tRNA-modifying protein YgfZ (326 aa).

Folate is bound by residues tryptophan 27 and tryptophan 189.

Belongs to the tRNA-modifying YgfZ family.

The protein localises to the cytoplasm. Its function is as follows. Folate-binding protein involved in regulating the level of ATP-DnaA and in the modification of some tRNAs. It is probably a key factor in regulatory networks that act via tRNA modification, such as initiation of chromosomal replication. The chain is tRNA-modifying protein YgfZ from Escherichia coli (strain SE11).